The primary structure comprises 66 residues: Small ribosomal subunit protein eS30 (66 aa).

Residues 1-35 (MGKVHGGLNRAGKVRNATPKKDKEEKRKPKVGRAK) form a disordered region.

This sequence belongs to the eukaryotic ribosomal protein eS30 family.

In Dictyostelium discoideum (Social amoeba), this protein is Small ribosomal subunit protein eS30 (rps30-1).